The primary structure comprises 884 residues: Alanine--tRNA ligase (884 aa).

4 residues coordinate Zn(2+): His-568, His-572, Cys-670, and His-674.

It belongs to the class-II aminoacyl-tRNA synthetase family. Zn(2+) is required as a cofactor.

It localises to the cytoplasm. The catalysed reaction is tRNA(Ala) + L-alanine + ATP = L-alanyl-tRNA(Ala) + AMP + diphosphate. Functionally, catalyzes the attachment of alanine to tRNA(Ala) in a two-step reaction: alanine is first activated by ATP to form Ala-AMP and then transferred to the acceptor end of tRNA(Ala). Also edits incorrectly charged Ser-tRNA(Ala) and Gly-tRNA(Ala) via its editing domain. This Synechococcus sp. (strain JA-2-3B'a(2-13)) (Cyanobacteria bacterium Yellowstone B-Prime) protein is Alanine--tRNA ligase.